Consider the following 239-residue polypeptide: uncharacterized protein (239 aa).

This is an uncharacterized protein from Saccharomyces cerevisiae (strain ATCC 204508 / S288c) (Baker's yeast).